The chain runs to 533 residues: WUSCHEL-related homeobox 7 (533 aa).

Disordered regions lie at residues 1–74 and 125–212; these read MASS…NPRP and SKNK…STQA. A compositionally biased stretch (low complexity) spans 28 to 41; it reads AGSPPSLLSGSSAG. A compositionally biased stretch (basic and acidic residues) spans 59–68; sequence GEERVPDPKP. A DNA-binding region (homeobox; WUS-type) is located at residues 65-129; sequence DPKPRWNPRP…NRKSRSKNKL (65 aa). Over residues 132–143 the composition is skewed to gly residues; sequence GGTGRAGLGLGG. Over residues 161–174 the composition is skewed to pro residues; that stretch reads FTPPPPILPAPQPV. Positions 175–202 are enriched in low complexity; it reads QPQQQLVSPVAAPTSSSSSSSDRSSGSS.

This sequence belongs to the WUS homeobox family.

The protein localises to the nucleus. Its function is as follows. Transcription factor which may be involved in developmental processes. This Oryza sativa subsp. japonica (Rice) protein is WUSCHEL-related homeobox 7 (WOX7).